We begin with the raw amino-acid sequence, 220 residues long: Peptide methionine sulfoxide reductase MsrA (220 aa).

The active site involves Cys-52.

Belongs to the MsrA Met sulfoxide reductase family.

It catalyses the reaction L-methionyl-[protein] + [thioredoxin]-disulfide + H2O = L-methionyl-(S)-S-oxide-[protein] + [thioredoxin]-dithiol. It carries out the reaction [thioredoxin]-disulfide + L-methionine + H2O = L-methionine (S)-S-oxide + [thioredoxin]-dithiol. Has an important function as a repair enzyme for proteins that have been inactivated by oxidation. Catalyzes the reversible oxidation-reduction of methionine sulfoxide in proteins to methionine. The sequence is that of Peptide methionine sulfoxide reductase MsrA from Corynebacterium diphtheriae (strain ATCC 700971 / NCTC 13129 / Biotype gravis).